Here is a 221-residue protein sequence, read N- to C-terminus: Endo-1,4-beta-xylanase A (221 aa).

Positions 1–16 (MKFFATIAALVVGAVA) are cleaved as a signal peptide. Residues 29 to 221 (PMLIERAGPG…GTGSASVTVS (193 aa)) enclose the GH11 domain. The active-site Nucleophile is E114. E208 serves as the catalytic Proton donor.

It belongs to the glycosyl hydrolase 11 (cellulase G) family.

The protein localises to the secreted. The catalysed reaction is Endohydrolysis of (1-&gt;4)-beta-D-xylosidic linkages in xylans.. The protein operates within glycan degradation; xylan degradation. Functionally, endo-1,4-beta-xylanase involved in the hydrolysis of xylan, a major structural heterogeneous polysaccharide found in plant biomass representing the second most abundant polysaccharide in the biosphere, after cellulose. In Aureobasidium pullulans (Black yeast), this protein is Endo-1,4-beta-xylanase A (xynA).